A 556-amino-acid chain; its full sequence is Dihydroxy-acid dehydratase (556 aa).

D78 provides a ligand contact to Mg(2+). C119 contacts [2Fe-2S] cluster. Positions 120 and 121 each coordinate Mg(2+). Residue K121 is modified to N6-carboxylysine. C195 is a [2Fe-2S] cluster binding site. E446 lines the Mg(2+) pocket. S472 serves as the catalytic Proton acceptor.

This sequence belongs to the IlvD/Edd family. In terms of assembly, homodimer. It depends on [2Fe-2S] cluster as a cofactor. Requires Mg(2+) as cofactor.

The catalysed reaction is (2R)-2,3-dihydroxy-3-methylbutanoate = 3-methyl-2-oxobutanoate + H2O. It carries out the reaction (2R,3R)-2,3-dihydroxy-3-methylpentanoate = (S)-3-methyl-2-oxopentanoate + H2O. The protein operates within amino-acid biosynthesis; L-isoleucine biosynthesis; L-isoleucine from 2-oxobutanoate: step 3/4. It functions in the pathway amino-acid biosynthesis; L-valine biosynthesis; L-valine from pyruvate: step 3/4. Its function is as follows. Functions in the biosynthesis of branched-chain amino acids. Catalyzes the dehydration of (2R,3R)-2,3-dihydroxy-3-methylpentanoate (2,3-dihydroxy-3-methylvalerate) into 2-oxo-3-methylpentanoate (2-oxo-3-methylvalerate) and of (2R)-2,3-dihydroxy-3-methylbutanoate (2,3-dihydroxyisovalerate) into 2-oxo-3-methylbutanoate (2-oxoisovalerate), the penultimate precursor to L-isoleucine and L-valine, respectively. The chain is Dihydroxy-acid dehydratase from Desulfatibacillum aliphaticivorans.